The chain runs to 218 residues: Protein GrpE (218 aa).

The segment at 1-75 is disordered; the sequence is MTTPNGMPDN…DVDPDLDGDG (75 aa). Residues 23 to 40 show a composition bias toward basic and acidic residues; that stretch reads SADRAEQAAEEAAARQAE. Residues 48-75 are compositionally biased toward acidic residues; that stretch reads SEEEISPELEAEINDLLSDVDPDLDGDG.

It belongs to the GrpE family. As to quaternary structure, homodimer.

The protein resides in the cytoplasm. In terms of biological role, participates actively in the response to hyperosmotic and heat shock by preventing the aggregation of stress-denatured proteins, in association with DnaK and GrpE. It is the nucleotide exchange factor for DnaK and may function as a thermosensor. Unfolded proteins bind initially to DnaJ; upon interaction with the DnaJ-bound protein, DnaK hydrolyzes its bound ATP, resulting in the formation of a stable complex. GrpE releases ADP from DnaK; ATP binding to DnaK triggers the release of the substrate protein, thus completing the reaction cycle. Several rounds of ATP-dependent interactions between DnaJ, DnaK and GrpE are required for fully efficient folding. This is Protein GrpE from Corynebacterium glutamicum (strain ATCC 13032 / DSM 20300 / JCM 1318 / BCRC 11384 / CCUG 27702 / LMG 3730 / NBRC 12168 / NCIMB 10025 / NRRL B-2784 / 534).